The sequence spans 345 residues: Dihydroorotase (345 aa).

Residues histidine 13 and histidine 15 each coordinate Zn(2+). Substrate-binding positions include 15 to 17 and asparagine 41; that span reads HFR. Zn(2+) contacts are provided by lysine 98, histidine 135, and histidine 173. Lysine 98 carries the post-translational modification N6-carboxylysine. Residue histidine 135 participates in substrate binding. Residue leucine 218 coordinates substrate. A Zn(2+)-binding site is contributed by aspartate 246. Residue aspartate 246 is part of the active site. Positions 250 and 262 each coordinate substrate.

Belongs to the metallo-dependent hydrolases superfamily. DHOase family. Class II DHOase subfamily. Homodimer. It depends on Zn(2+) as a cofactor.

It catalyses the reaction (S)-dihydroorotate + H2O = N-carbamoyl-L-aspartate + H(+). Its pathway is pyrimidine metabolism; UMP biosynthesis via de novo pathway; (S)-dihydroorotate from bicarbonate: step 3/3. In terms of biological role, catalyzes the reversible cyclization of carbamoyl aspartate to dihydroorotate. This chain is Dihydroorotase, found in Shewanella frigidimarina (strain NCIMB 400).